The sequence spans 59 residues: MDHRLLEIIACPVCHGKLIFDKENSELICKIDHLAYPVRDNIPVLLENEARELSLEEEK.

This sequence belongs to the UPF0434 family.

This chain is UPF0434 protein PMI0721, found in Proteus mirabilis (strain HI4320).